Consider the following 50-residue polypeptide: Defensin D1 (50 aa).

Intrachain disulfides connect Cys3-Cys50, Cys14-Cys35, Cys20-Cys44, and Cys24-Cys46.

In terms of processing, contains 4 disulfide bonds.

It is found in the secreted. Functionally, antimicrobial peptide active against fungi, Gram-positive and Gram-negative bacteria. Inhibits growth of hyphae in the fungi A.niger (IC(50)=3.5 ug/ml), B.sorokiniana (IC(50)=3.0 ug/ml), F.oxysporum (IC(50)=9.5 ug/ml), F.graminearum (IC(50)=6.9 ug/ml), F.culmorum (IC(50)=6.9 ug/ml) and B.cinerea (IC(50)=27.4 ug/ml). Has no effect on spore germination. Destroys spores in germinated conidia by disruption of cell walls and membranes in A.niger and B.sorokiniana. Causes vacuolization of germinated macro- and microconidia in F.oxysporum, F.graminearum and F.culmorum. Strongly inhibits growth of P.infestans on potato tubers above concentrations of 13.6 ug/ml. Inhibits growth of Gram-positive bacteria C.michiganensis and B.subtilis and of Gram-negative bacteria P.syringae, E.carotovora and E.coli. The chain is Defensin D1 from Nigella sativa (Black cumin).